We begin with the raw amino-acid sequence, 322 residues long: Ribose-phosphate pyrophosphokinase (322 aa).

ATP contacts are provided by residues 43–45 and 102–103; these read DGE and RQ. Residues H137 and D177 each contribute to the Mg(2+) site. K201 is an active-site residue. Residues R203, D227, and 231-235 each bind D-ribose 5-phosphate; that span reads DTAGT.

This sequence belongs to the ribose-phosphate pyrophosphokinase family. Class I subfamily. As to quaternary structure, homohexamer. Requires Mg(2+) as cofactor.

The protein localises to the cytoplasm. It catalyses the reaction D-ribose 5-phosphate + ATP = 5-phospho-alpha-D-ribose 1-diphosphate + AMP + H(+). Its pathway is metabolic intermediate biosynthesis; 5-phospho-alpha-D-ribose 1-diphosphate biosynthesis; 5-phospho-alpha-D-ribose 1-diphosphate from D-ribose 5-phosphate (route I): step 1/1. Involved in the biosynthesis of the central metabolite phospho-alpha-D-ribosyl-1-pyrophosphate (PRPP) via the transfer of pyrophosphoryl group from ATP to 1-hydroxyl of ribose-5-phosphate (Rib-5-P). This Xylella fastidiosa (strain 9a5c) protein is Ribose-phosphate pyrophosphokinase.